We begin with the raw amino-acid sequence, 311 residues long: Lipoyl synthase (311 aa).

Cys47, Cys52, Cys58, Cys73, Cys77, Cys80, and Ser286 together coordinate [4Fe-4S] cluster. A Radical SAM core domain is found at 59–276; sequence WSRHTATYLA…RSVGESLGLF (218 aa).

This sequence belongs to the radical SAM superfamily. Lipoyl synthase family. The cofactor is [4Fe-4S] cluster.

The protein localises to the cytoplasm. The catalysed reaction is [[Fe-S] cluster scaffold protein carrying a second [4Fe-4S](2+) cluster] + N(6)-octanoyl-L-lysyl-[protein] + 2 oxidized [2Fe-2S]-[ferredoxin] + 2 S-adenosyl-L-methionine + 4 H(+) = [[Fe-S] cluster scaffold protein] + N(6)-[(R)-dihydrolipoyl]-L-lysyl-[protein] + 4 Fe(3+) + 2 hydrogen sulfide + 2 5'-deoxyadenosine + 2 L-methionine + 2 reduced [2Fe-2S]-[ferredoxin]. It participates in protein modification; protein lipoylation via endogenous pathway; protein N(6)-(lipoyl)lysine from octanoyl-[acyl-carrier-protein]: step 2/2. Catalyzes the radical-mediated insertion of two sulfur atoms into the C-6 and C-8 positions of the octanoyl moiety bound to the lipoyl domains of lipoate-dependent enzymes, thereby converting the octanoylated domains into lipoylated derivatives. The sequence is that of Lipoyl synthase from Chlamydia trachomatis serovar L2 (strain ATCC VR-902B / DSM 19102 / 434/Bu).